The chain runs to 202 residues: Putative transposon Tn552 DNA-invertase bin3 (202 aa).

The region spanning 1–143 (MIIGYARVSS…QGIQVAKEKG (143 aa)) is the Resolvase/invertase-type recombinase catalytic domain. Ser9 (O-(5'-phospho-DNA)-serine intermediate) is an active-site residue.

This sequence belongs to the site-specific recombinase resolvase family.

Potential DNA invertase. In Staphylococcus aureus, this protein is Putative transposon Tn552 DNA-invertase bin3 (bin3).